We begin with the raw amino-acid sequence, 330 residues long: Phosphate acyltransferase (330 aa).

Belongs to the PlsX family. In terms of assembly, homodimer. Probably interacts with PlsY.

It localises to the cytoplasm. It catalyses the reaction a fatty acyl-[ACP] + phosphate = an acyl phosphate + holo-[ACP]. The protein operates within lipid metabolism; phospholipid metabolism. Functionally, catalyzes the reversible formation of acyl-phosphate (acyl-PO(4)) from acyl-[acyl-carrier-protein] (acyl-ACP). This enzyme utilizes acyl-ACP as fatty acyl donor, but not acyl-CoA. The protein is Phosphate acyltransferase of Streptococcus pneumoniae serotype 2 (strain D39 / NCTC 7466).